Here is a 28-residue protein sequence, read N- to C-terminus: NLQYLKNMIKCTNTRHWLSFTNYGCYCG.

This sequence belongs to the phospholipase A2 family. Group I subfamily. It depends on Ca(2+) as a cofactor. In terms of tissue distribution, expressed by the venom gland.

The protein localises to the secreted. The enzyme catalyses a 1,2-diacyl-sn-glycero-3-phosphocholine + H2O = a 1-acyl-sn-glycero-3-phosphocholine + a fatty acid + H(+). In terms of biological role, snake venom phospholipase A2 (PLA2) that inhibits neuromuscular transmission by blocking acetylcholine release from the nerve termini. PLA2 catalyzes the calcium-dependent hydrolysis of the 2-acyl groups in 3-sn-phosphoglycerides. This Micrurus nigrocinctus (Central American coral snake) protein is Phospholipase A2 2.